The chain runs to 274 residues: Putative phosphoenolpyruvate synthase regulatory protein (274 aa).

154-161 (AVSRSGKT) is an ADP binding site.

This sequence belongs to the pyruvate, phosphate/water dikinase regulatory protein family. PSRP subfamily.

The enzyme catalyses [pyruvate, water dikinase] + ADP = [pyruvate, water dikinase]-phosphate + AMP + H(+). It carries out the reaction [pyruvate, water dikinase]-phosphate + phosphate + H(+) = [pyruvate, water dikinase] + diphosphate. Its function is as follows. Bifunctional serine/threonine kinase and phosphorylase involved in the regulation of the phosphoenolpyruvate synthase (PEPS) by catalyzing its phosphorylation/dephosphorylation. The polypeptide is Putative phosphoenolpyruvate synthase regulatory protein (Alkalilimnicola ehrlichii (strain ATCC BAA-1101 / DSM 17681 / MLHE-1)).